We begin with the raw amino-acid sequence, 682 residues long: Guanylate cyclase soluble subunit beta-2 (682 aa).

His43 contacts heme. Residues 408–536 enclose the Guanylate cyclase domain; that stretch reads TILFSDVVTF…DTVNTASRME (129 aa). Residues 592-667 form a disordered region; that stretch reads MGRPSAPADG…QPSPDETKTS (76 aa). The span at 649 to 667 shows a compositional bias: polar residues; that stretch reads RNSTDAVNNQPSPDETKTS.

This sequence belongs to the adenylyl cyclase class-4/guanylyl cyclase family. Heterodimer of an alpha and a beta chain. It depends on heme as a cofactor. Kidney and liver.

Its subcellular location is the cytoplasm. It carries out the reaction GTP = 3',5'-cyclic GMP + diphosphate. Activated by nitric oxide in the presence of magnesium or manganese ions. This Rattus norvegicus (Rat) protein is Guanylate cyclase soluble subunit beta-2 (Gucy1b2).